The chain runs to 405 residues: Ubiquitin-like modifier-activating enzyme 5 (405 aa).

Residues 1 to 44 (MATVEELQTRVKQLEEELERERTRNRGGTDGGGGRKKIDQMSSE) are disordered. The span at 7 to 24 (LQTRVKQLEEELERERTR) shows a compositional bias: basic and acidic residues. Glycine 81, aspartate 102, lysine 125, asparagine 148, and asparagine 182 together coordinate ATP. 2 residues coordinate Zn(2+): cysteine 224 and cysteine 227. Catalysis depends on cysteine 248, which acts as the Glycyl thioester intermediate. 2 residues coordinate Zn(2+): cysteine 301 and cysteine 306. Positions 346-377 (AETTEEELKAASHGHVPELVEGVHVAYVRPMT) are linker. The UFC1-binding sequence (UFC) motif lies at 390-405 (DDQESLEDLMAKMKSI).

It belongs to the ubiquitin-activating E1 family. UBA5 subfamily. As to quaternary structure, homodimer; homodimerization is required for UFM1 activation. Interacts (via UIS motif) with UFM1; binds UFM1 via a trans-binding mechanism in which UFM1 interacts with distinct sites in both subunits of the UBA5 homodimer. Interacts (via C-terminus) with UFC1.

The protein localises to the cytoplasm. Its subcellular location is the nucleus. The protein resides in the endoplasmic reticulum membrane. It is found in the golgi apparatus. Its function is as follows. E1-like enzyme which specifically catalyzes the first step in ufmylation. Activates UFM1 by first adenylating its C-terminal glycine residue with ATP, and thereafter linking this residue to the side chain of a cysteine residue in E1, yielding a UFM1-E1 thioester and free AMP. Activates UFM1 via a trans-binding mechanism, in which UFM1 interacts with distinct sites in both subunits of the UBA5 homodimer. Trans-binding also promotes stabilization of the UBA5 homodimer, and enhances ATP-binding. Transfer of UFM1 from UBA5 to the E2-like enzyme UFC1 also takes place using a trans mechanism. This is Ubiquitin-like modifier-activating enzyme 5 from Branchiostoma floridae (Florida lancelet).